Reading from the N-terminus, the 154-residue chain is Superoxide dismutase [Cu-Zn] (154 aa).

3 residues coordinate Cu cation: His-47, His-49, and His-64. Cys-58 and Cys-147 form a disulfide bridge. Residues His-64, His-72, His-81, and Asp-84 each coordinate Zn(2+). His-121 contributes to the Cu cation binding site. A compositionally biased stretch (basic and acidic residues) spans 124 to 137 (TDDLGKGENEESKK). A disordered region spans residues 124-144 (TDDLGKGENEESKKTGNAGTR). A substrate-binding site is contributed by Arg-144.

This sequence belongs to the Cu-Zn superoxide dismutase family. Homodimer. The cofactor is Cu cation. Requires Zn(2+) as cofactor.

The protein resides in the cytoplasm. It catalyses the reaction 2 superoxide + 2 H(+) = H2O2 + O2. In terms of biological role, destroys radicals which are normally produced within the cells and which are toxic to biological systems. This chain is Superoxide dismutase [Cu-Zn] (sod1), found in Botryotinia fuckeliana (Noble rot fungus).